A 244-amino-acid chain; its full sequence is Trypsin (244 aa).

The first 15 residues, 1-15 (MKFLVILVLLGAAVA), serve as a signal peptide directing secretion. Positions 16-21 (FEDDDK) are cleaved as a propeptide — activation peptide. The region spanning 22–242 (IVGGFTCAKN…FVTWIQSTIS (221 aa)) is the Peptidase S1 domain. 6 disulfides stabilise this stretch: Cys-28/Cys-158, Cys-46/Cys-62, Cys-130/Cys-231, Cys-137/Cys-204, Cys-169/Cys-183, and Cys-194/Cys-218. Residue His-61 is the Charge relay system of the active site. Positions 73, 75, and 83 each coordinate Ca(2+). Asp-105 acts as the Charge relay system in catalysis. Ser-198 functions as the Charge relay system in the catalytic mechanism.

The protein belongs to the peptidase S1 family. It depends on Ca(2+) as a cofactor.

The protein localises to the secreted. It is found in the extracellular space. It carries out the reaction Preferential cleavage: Arg-|-Xaa, Lys-|-Xaa.. The polypeptide is Trypsin (Xenopus laevis (African clawed frog)).